An 89-amino-acid polypeptide reads, in one-letter code: Acylphosphatase (89 aa).

One can recognise an Acylphosphatase-like domain in the interval 3–89 (ALFIKISGRV…QNFTSFDIVP (87 aa)). Catalysis depends on residues Arg18 and Asn36.

The protein belongs to the acylphosphatase family.

It catalyses the reaction an acyl phosphate + H2O = a carboxylate + phosphate + H(+). The chain is Acylphosphatase (acyP) from Pseudothermotoga lettingae (strain ATCC BAA-301 / DSM 14385 / NBRC 107922 / TMO) (Thermotoga lettingae).